The primary structure comprises 60 residues: Large ribosomal subunit protein bL32 (60 aa).

It belongs to the bacterial ribosomal protein bL32 family.

This is Large ribosomal subunit protein bL32 from Hydrogenobaculum sp. (strain Y04AAS1).